The primary structure comprises 146 residues: MNTFALLSVFIQACLVQSVFSQCTSRAAVAADRGIIGGYGFGAPCGLAGGYGLEAPYGWAGYADYGYPAGAYGIDAYGGIGEGNVAVAGELPVAGTTAVAGQVPIMGAVKFGGDVCAAGSVSIAGKCACGCGDYGYGYGLGAPYLY.

The signal sequence occupies residues 1 to 21; that stretch reads MNTFALLSVFIQACLVQSVFS.

It belongs to the chorion protein family.

In terms of biological role, this protein is one of many from the eggshell of the gypsy moth. This chain is Chorion class A protein Ld3/Ld29, found in Lymantria dispar (Gypsy moth).